The chain runs to 320 residues: Methionyl-tRNA formyltransferase (320 aa).

A (6S)-5,6,7,8-tetrahydrofolate-binding site is contributed by 111 to 114 (SLLP).

This sequence belongs to the Fmt family.

The catalysed reaction is L-methionyl-tRNA(fMet) + (6R)-10-formyltetrahydrofolate = N-formyl-L-methionyl-tRNA(fMet) + (6S)-5,6,7,8-tetrahydrofolate + H(+). Its function is as follows. Attaches a formyl group to the free amino group of methionyl-tRNA(fMet). The formyl group appears to play a dual role in the initiator identity of N-formylmethionyl-tRNA by promoting its recognition by IF2 and preventing the misappropriation of this tRNA by the elongation apparatus. This chain is Methionyl-tRNA formyltransferase, found in Pediococcus pentosaceus (strain ATCC 25745 / CCUG 21536 / LMG 10740 / 183-1w).